The primary structure comprises 631 residues: 1-deoxy-D-xylulose-5-phosphate synthase (631 aa).

Thiamine diphosphate contacts are provided by residues histidine 87 and 128-130; that span reads GHS. Aspartate 159 provides a ligand contact to Mg(2+). Residues 160 to 161, asparagine 188, phenylalanine 295, and glutamate 377 contribute to the thiamine diphosphate site; that span reads GA. Asparagine 188 lines the Mg(2+) pocket.

It belongs to the transketolase family. DXPS subfamily. In terms of assembly, homodimer. Requires Mg(2+) as cofactor. It depends on thiamine diphosphate as a cofactor.

The enzyme catalyses D-glyceraldehyde 3-phosphate + pyruvate + H(+) = 1-deoxy-D-xylulose 5-phosphate + CO2. It functions in the pathway metabolic intermediate biosynthesis; 1-deoxy-D-xylulose 5-phosphate biosynthesis; 1-deoxy-D-xylulose 5-phosphate from D-glyceraldehyde 3-phosphate and pyruvate: step 1/1. Functionally, catalyzes the acyloin condensation reaction between C atoms 2 and 3 of pyruvate and glyceraldehyde 3-phosphate to yield 1-deoxy-D-xylulose-5-phosphate (DXP). The polypeptide is 1-deoxy-D-xylulose-5-phosphate synthase (Pseudomonas putida (strain ATCC 700007 / DSM 6899 / JCM 31910 / BCRC 17059 / LMG 24140 / F1)).